The primary structure comprises 847 residues: Leucine--tRNA ligase (847 aa).

The short motif at 41–51 is the 'HIGH' region element; the sequence is PYPSGRIHMGH. Residues 619–623 carry the 'KMSKS' region motif; sequence KMSKS. Residue Lys622 coordinates ATP.

It belongs to the class-I aminoacyl-tRNA synthetase family.

It is found in the cytoplasm. The catalysed reaction is tRNA(Leu) + L-leucine + ATP = L-leucyl-tRNA(Leu) + AMP + diphosphate. The sequence is that of Leucine--tRNA ligase from Cereibacter sphaeroides (strain KD131 / KCTC 12085) (Rhodobacter sphaeroides).